The sequence spans 538 residues: CWF19-like protein 1 (538 aa).

Disordered regions lie at residues 259–278 and 298–324; these read PDVT…TGKQ and QGRK…PPQP.

This sequence belongs to the CWF19 family.

This is CWF19-like protein 1 (CWF19L1) from Pongo abelii (Sumatran orangutan).